The following is a 44-amino-acid chain: Cytochrome b559 subunit beta (44 aa).

The chain crosses the membrane as a helical span at residues 19-35; sequence WLAIHGIAVPTIFFLGA. Position 23 (His-23) interacts with heme.

The protein belongs to the PsbE/PsbF family. Heterodimer of an alpha subunit and a beta subunit. PSII is composed of 1 copy each of membrane proteins PsbA, PsbB, PsbC, PsbD, PsbE, PsbF, PsbH, PsbI, PsbJ, PsbK, PsbL, PsbM, PsbT, PsbX, PsbY, PsbZ, Psb30/Ycf12, at least 3 peripheral proteins of the oxygen-evolving complex and a large number of cofactors. It forms dimeric complexes. It depends on heme b as a cofactor.

It localises to the plastid. Its subcellular location is the chloroplast thylakoid membrane. Its function is as follows. This b-type cytochrome is tightly associated with the reaction center of photosystem II (PSII). PSII is a light-driven water:plastoquinone oxidoreductase that uses light energy to abstract electrons from H(2)O, generating O(2) and a proton gradient subsequently used for ATP formation. It consists of a core antenna complex that captures photons, and an electron transfer chain that converts photonic excitation into a charge separation. The sequence is that of Cytochrome b559 subunit beta from Chlamydomonas reinhardtii (Chlamydomonas smithii).